Consider the following 118-residue polypeptide: DNA-directed RNA polymerase subunit omega (118 aa).

Belongs to the RNA polymerase subunit omega family. The RNAP catalytic core consists of 2 alpha, 1 beta, 1 beta' and 1 omega subunit. When a sigma factor is associated with the core the holoenzyme is formed, which can initiate transcription.

It catalyses the reaction RNA(n) + a ribonucleoside 5'-triphosphate = RNA(n+1) + diphosphate. Promotes RNA polymerase assembly. Latches the N- and C-terminal regions of the beta' subunit thereby facilitating its interaction with the beta and alpha subunits. The protein is DNA-directed RNA polymerase subunit omega of Paracoccus denitrificans (strain Pd 1222).